Consider the following 156-residue polypeptide: Small ribosomal subunit protein uS7 (156 aa).

It belongs to the universal ribosomal protein uS7 family. In terms of assembly, part of the 30S ribosomal subunit. Contacts proteins S9 and S11.

In terms of biological role, one of the primary rRNA binding proteins, it binds directly to 16S rRNA where it nucleates assembly of the head domain of the 30S subunit. Is located at the subunit interface close to the decoding center, probably blocks exit of the E-site tRNA. The sequence is that of Small ribosomal subunit protein uS7 from Treponema denticola (strain ATCC 35405 / DSM 14222 / CIP 103919 / JCM 8153 / KCTC 15104).